Here is a 437-residue protein sequence, read N- to C-terminus: GTPase Obg (437 aa).

An Obg domain is found at 2 to 160 (SMFLDTAKIS…RQLELELKIL (159 aa)). Residues 161–338 (ADVGLVGFPS…LLEATAELLA (178 aa)) form the OBG-type G domain. Residues 167 to 174 (GFPSVGKS), 192 to 196 (FTTIV), 214 to 217 (DLPG), 284 to 287 (NKMD), and 319 to 321 (SSL) each bind GTP. The Mg(2+) site is built by S174 and T194. Residues 359-437 (GFAETEKDFE…IGKFEFEFVD (79 aa)) enclose the OCT domain.

This sequence belongs to the TRAFAC class OBG-HflX-like GTPase superfamily. OBG GTPase family. As to quaternary structure, monomer. Mg(2+) is required as a cofactor.

The protein localises to the cytoplasm. Functionally, an essential GTPase which binds GTP, GDP and possibly (p)ppGpp with moderate affinity, with high nucleotide exchange rates and a fairly low GTP hydrolysis rate. Plays a role in control of the cell cycle, stress response, ribosome biogenesis and in those bacteria that undergo differentiation, in morphogenesis control. The sequence is that of GTPase Obg from Streptococcus pyogenes serotype M5 (strain Manfredo).